A 292-amino-acid polypeptide reads, in one-letter code: MMKVDQDYSCSIPPGFRFHPTDEELVGYYLKKKIASQRIDLDVIREIDLYKIEPWDLQERCRIGYEEQTEWYFFSHRDKKYPTGTRTNRATVAGFWKATGRDKAVYLNSKLIGMRKTLVFYRGRAPNGQKSDWIIHEYYSLESHQNSPPQEEGWVVCRAFKKRTTIPTKRRQLWDPNCLFYDDATLLEPLDKRARHNPDFTATPFKQELLSEASHVQDGDFGSMYLQCIDDDQFSQLPQLESPSLPSEITPHSTTFSENSSRKDDMSSEKRITDWRYLDKFVASQFLMSGED.

One can recognise an NAC domain in the interval 12-162; sequence IPPGFRFHPT…GWVVCRAFKK (151 aa). A DNA-binding region spans residues 112-168; sequence IGMRKTLVFYRGRAPNGQKSDWIIHEYYSLESHQNSPPQEEGWVVCRAFKKRTTIPT. Residues 237–259 are compositionally biased toward polar residues; it reads LPQLESPSLPSEITPHSTTFSEN. A disordered region spans residues 237–269; that stretch reads LPQLESPSLPSEITPHSTTFSENSSRKDDMSSE. A compositionally biased stretch (basic and acidic residues) spans 260-269; that stretch reads SSRKDDMSSE.

Belongs to the plant vascular related NAC-domain protein family. Interacts with NAC030/VND7. In terms of tissue distribution, detected in root protoxylem and metaxylem poles and in vessels of protoxylems, outermost metaxylems, inner metaxylems, shoots and hypocotyls. Expressed in roots, hypocotyls, cotyledons and leaves. Present in developing xylems. Present in root developing xylems. Specifically expressed in vessels but not in interfascicular fibers in stems.

It localises to the nucleus. In terms of biological role, transcription activator that binds to the secondary wall NAC binding element (SNBE), 5'-(T/A)NN(C/T)(T/C/G)TNNNNNNNA(A/C)GN(A/C/T)(A/T)-3', in the promoter of target genes. Involved in xylem formation by promoting the expression of secondary wall-associated transcription factors and of genes involved in secondary wall biosynthesis and programmed cell death, genes driven by the secondary wall NAC binding element (SNBE). Triggers thickening of secondary walls. In Arabidopsis thaliana (Mouse-ear cress), this protein is NAC domain-containing protein 105.